The chain runs to 249 residues: MAKSGLRQDPQSTAAATVLKRAVELDSESRYPQALVCYQEGIDLLLQVLKGTKDNTKRCNLREKISKYMDRAENIKKYLDQEKEDGKYHKQIKIEENATGFSYESLFREYLNETVTEVWIEDPYIRHTHQLYNFLRFCEMLIKRPCKVKTIHLLTSLDEGIEQVQQSRGLQEIEESLRSHGVLLEVQYSSSIHDREIRFNNGWMIKIGRGLDYFKKPQSRFSLGYCDFDLRPCHETTVDIFHKKHTKNI.

The region spanning 8–86 is the MIT domain; sequence QDPQSTAAAT…KYLDQEKEDG (79 aa). An important for association with membranes region spans residues 168-231; that stretch reads RGLQEIEESL…SLGYCDFDLR (64 aa).

In terms of assembly, homodimer. Interacts (via MIT domain) with CHMP1A, CHMP1B, CHMP2A and IST1.

It localises to the late endosome membrane. It is found in the midbody. Its subcellular location is the membrane. Functionally, required for efficient abscission at the end of cytokinesis, together with components of the ESCRT-III complex. The protein is MIT domain-containing protein 1 (MITD1) of Homo sapiens (Human).